The sequence spans 515 residues: 2-isopropylmalate synthase (515 aa).

The region spanning 4-264 (VKIFDTTLRD…NIGINQDTTQ (261 aa)) is the Pyruvate carboxyltransferase domain. Residues D13, H201, H203, and N237 each contribute to the Mn(2+) site. The tract at residues 390–515 (ELDYLSVNTG…RQTTSAQEGI (126 aa)) is regulatory domain.

This sequence belongs to the alpha-IPM synthase/homocitrate synthase family. LeuA type 1 subfamily. As to quaternary structure, homodimer. Mn(2+) serves as cofactor.

The protein resides in the cytoplasm. It carries out the reaction 3-methyl-2-oxobutanoate + acetyl-CoA + H2O = (2S)-2-isopropylmalate + CoA + H(+). Its pathway is amino-acid biosynthesis; L-leucine biosynthesis; L-leucine from 3-methyl-2-oxobutanoate: step 1/4. In terms of biological role, catalyzes the condensation of the acetyl group of acetyl-CoA with 3-methyl-2-oxobutanoate (2-ketoisovalerate) to form 3-carboxy-3-hydroxy-4-methylpentanoate (2-isopropylmalate). This Halothermothrix orenii (strain H 168 / OCM 544 / DSM 9562) protein is 2-isopropylmalate synthase.